We begin with the raw amino-acid sequence, 397 residues long: Elongation factor Tu (397 aa).

The 197-residue stretch at 10-206 folds into the tr-type G domain; the sequence is KPHVNIGTIG…AVDASIPEPE (197 aa). Positions 19 to 26 are G1; sequence GHIDHGKT. A GTP-binding site is contributed by 19-26; the sequence is GHIDHGKT. T26 contributes to the Mg(2+) binding site. Residues 62–66 form a G2 region; the sequence is GITIS. The tract at residues 83–86 is G3; sequence DCPG. Residues 83-87 and 138-141 each bind GTP; these read DCPGH and NKAD. Residues 138–141 form a G4 region; that stretch reads NKAD. The tract at residues 176–178 is G5; it reads SAL.

The protein belongs to the TRAFAC class translation factor GTPase superfamily. Classic translation factor GTPase family. EF-Tu/EF-1A subfamily. As to quaternary structure, monomer.

It localises to the cytoplasm. It catalyses the reaction GTP + H2O = GDP + phosphate + H(+). GTP hydrolase that promotes the GTP-dependent binding of aminoacyl-tRNA to the A-site of ribosomes during protein biosynthesis. This chain is Elongation factor Tu, found in Parafrankia sp. (strain EAN1pec).